We begin with the raw amino-acid sequence, 318 residues long: ATP phosphoribosyltransferase regulatory subunit (318 aa).

Belongs to the class-II aminoacyl-tRNA synthetase family. HisZ subfamily. In terms of assembly, heteromultimer composed of HisG and HisZ subunits.

It localises to the cytoplasm. The protein operates within amino-acid biosynthesis; L-histidine biosynthesis; L-histidine from 5-phospho-alpha-D-ribose 1-diphosphate: step 1/9. Required for the first step of histidine biosynthesis. May allow the feedback regulation of ATP phosphoribosyltransferase activity by histidine. The polypeptide is ATP phosphoribosyltransferase regulatory subunit (Lactococcus lactis subsp. cremoris (strain SK11)).